Here is a 301-residue protein sequence, read N- to C-terminus: GTPase Era (301 aa).

The Era-type G domain maps to 7–175 (YCGFIAIVGR…AAIVRKHLPE (169 aa)). Residues 15 to 22 (GRPNVGKS) form a G1 region. Residue 15-22 (GRPNVGKS) participates in GTP binding. Residues 41-45 (QTTRH) are G2. The segment at 62–65 (DTPG) is G3. Residues 62 to 66 (DTPGL) and 124 to 127 (NKVD) contribute to the GTP site. Residues 124–127 (NKVD) are G4. Residues 154-156 (ISA) form a G5 region. The KH type-2 domain occupies 206–283 (LGAELPYSVT…HLELWVKVKS (78 aa)).

This sequence belongs to the TRAFAC class TrmE-Era-EngA-EngB-Septin-like GTPase superfamily. Era GTPase family. In terms of assembly, monomer.

The protein resides in the cytoplasm. The protein localises to the cell inner membrane. An essential GTPase that binds both GDP and GTP, with rapid nucleotide exchange. Plays a role in 16S rRNA processing and 30S ribosomal subunit biogenesis and possibly also in cell cycle regulation and energy metabolism. This Cronobacter sakazakii (strain ATCC BAA-894) (Enterobacter sakazakii) protein is GTPase Era.